A 137-amino-acid chain; its full sequence is Immunoglobulin domain-containing protein oig-1 (137 aa).

An N-terminal signal peptide occupies residues 1–23; the sequence is MFSELRILRDILLLCFLSVGINA. The region spanning 41 to 133 is the Ig-like C2-type domain; it reads PKISRSSYFK…KGSRVKKFLT (93 aa). Residues cysteine 63 and cysteine 118 are joined by a disulfide bond.

As to expression, expressed in DD and VD GABAergic motor neurons. Expressed in a subset of head neurons including M2 motor neurons in the pharynx. Expressed in coelomocytes.

The protein resides in the membrane. The protein localises to the secreted. It is found in the extracellular space. Its subcellular location is the cell projection. It localises to the dendrite. The protein resides in the axon. In terms of biological role, plays a role in neural development, where it temporally regulates synapse formation in the D-type inhibitory GABAergic motor neurons, dorsal D (DD) and ventral D (VD) motor neurons. Controls the translocation of postsynaptic proteins, such as the acetylcholine receptor subunit acr-12, and presynaptic proteins, such as snb-1, along nerve cords to prevent premature synapse remodeling/formation. This Caenorhabditis elegans protein is Immunoglobulin domain-containing protein oig-1.